Here is a 328-residue protein sequence, read N- to C-terminus: Helicase VP6-A (328 aa).

Disordered regions lie at residues 31 to 128 (DWTE…TGAN) and 180 to 237 (VAEQ…SVGI). 3 stretches are compositionally biased toward basic and acidic residues: residues 36–61 (ETNK…EGRN), 71–83 (AKET…DRRI), and 96–109 (PGER…RGDG). Lys110 lines the ATP pocket. The span at 110–128 (KVGGGGGDADAGVGTTGAN) shows a compositional bias: gly residues. 2 stretches are compositionally biased toward basic and acidic residues: residues 180–205 (VAEQ…AAER) and 214–230 (PHGD…KTSE).

This sequence belongs to the orbivirus VP6 family. As to quaternary structure, homohexamer.

The protein localises to the virion. The enzyme catalyses ATP + H2O = ADP + phosphate + H(+). Its function is as follows. ATP dependent RNA helicase essential for RNA packaging and viral transcription. Possesses ss- and dsRNA-binding capacity. This chain is Helicase VP6-A (Segment-9), found in Bluetongue virus 1 (isolate South Africa) (BTV 1).